A 663-amino-acid polypeptide reads, in one-letter code: MAGAAALRRSARRVVLPGAYALSRALQHPERLLSSQASPDRGGVLGSELGLYPPERVRNFSIIAHVDHGKSTLADRLLELTGTIKKGHGQPQYLDKLQVERERGITVKAQTATMFYRHANNQLPASDQPDAPSYLLNLIDTPGHVDFSYEVSRSLAACQGALLVVDAAQGVQAQTIANFYLAFESNLSIIPVINKIDQPTADPDNVKAQLKRLFDIDPSEALLTSAKTGQGLSQVLPAVIERIPSPPGKCDSPVRMLLLDSYYDEYKGVICHVAVVDGALHKGDKIASAATGRTYEVLDVGIMHPELTPTGVLYTGQVGYVISGMRSTKEARIGDTLHQAKSIVEPLPGFKPARHMVFSGLYPADGSDFDALSHAIEKLTCNDASVSVTKETSTALGMGFRCGFLGLLHMDVFHQRLEQEHGAQVISTIPTVPYIFEYGDGSKVQVENPAALASNPGKRIAACWEPTVIATIIIPSEYVGPVIMLCSERRGEQQEYTFIDAQRALLKYRLPLREIIVDFYNELKSITSGYATFDYEDSEYQQSDLVKMDILLNGQPVDAMATIVHNQKAQRVGRELVDKLKKFIERQMFEITIQAAVGSKVIARETLSAMRKNVLAKCYGGDITRKKKLLEKQKEGKKRMKRVGSVDIPQEAFHELLKVSNSK.

The N-terminal 33 residues, 1 to 33, are a transit peptide targeting the mitochondrion; it reads MAGAAALRRSARRVVLPGAYALSRALQHPERLL. A tr-type G domain is found at 55 to 247; that stretch reads ERVRNFSIIA…AVIERIPSPP (193 aa). Residues 64 to 71, 140 to 144, and 194 to 197 contribute to the GTP site; these read AHVDHGKS, DTPGH, and NKID.

Belongs to the TRAFAC class translation factor GTPase superfamily. Classic translation factor GTPase family. LepA subfamily.

It is found in the mitochondrion inner membrane. The catalysed reaction is GTP + H2O = GDP + phosphate + H(+). Its function is as follows. Promotes mitochondrial protein synthesis. May act as a fidelity factor of the translation reaction, by catalyzing a one-codon backward translocation of tRNAs on improperly translocated ribosomes. Binds to mitochondrial ribosomes in a GTP-dependent manner. This chain is Translation factor GUF1 homolog, mitochondrial, found in Oryza sativa subsp. japonica (Rice).